Reading from the N-terminus, the 578-residue chain is Probable arginine--tRNA ligase, mitochondrial (578 aa).

A mitochondrion-targeting transit peptide spans 1–16; the sequence is MACGFRRSIACQLSRV. L-arginine contacts are provided by residues 133–135, H144, Y322, D326, and Q350; that span reads SPN. Positions 133–144 match the 'HIGH' region motif; that stretch reads SPNIAKKFHVGH. K568 carries the N6-acetyllysine modification.

This sequence belongs to the class-I aminoacyl-tRNA synthetase family.

It is found in the mitochondrion membrane. The enzyme catalyses tRNA(Arg) + L-arginine + ATP = L-arginyl-tRNA(Arg) + AMP + diphosphate. In terms of biological role, catalyzes the attachment of arginine to tRNA(Arg) in a two-step reaction: arginine is first activated by ATP to form Arg-AMP and then transferred to the acceptor end of tRNA(Arg). The protein is Probable arginine--tRNA ligase, mitochondrial (Rars2) of Mus musculus (Mouse).